The primary structure comprises 410 residues: Proteasome-activating nucleotidase (410 aa).

A coiled-coil region spans residues 1-70 (MENNSQNVLK…LRGEIERFRT (70 aa)). Residues 195–200 (GTGKTL) and His334 contribute to the ATP site. A docks into pockets in the proteasome alpha-ring to cause gate opening region spans residues 408–410 (MFG).

The protein belongs to the AAA ATPase family. In terms of assembly, homohexamer. The hexameric complex has a two-ring architecture resembling a top hat that caps the 20S proteasome core at one or both ends. Upon ATP-binding, the C-terminus of PAN interacts with the alpha-rings of the proteasome core by binding to the intersubunit pockets.

The protein resides in the cytoplasm. In terms of biological role, ATPase which is responsible for recognizing, binding, unfolding and translocation of substrate proteins into the archaeal 20S proteasome core particle. Is essential for opening the gate of the 20S proteasome via an interaction with its C-terminus, thereby allowing substrate entry and access to the site of proteolysis. Thus, the C-termini of the proteasomal ATPase function like a 'key in a lock' to induce gate opening and therefore regulate proteolysis. Unfolding activity requires energy from ATP hydrolysis, whereas ATP binding alone promotes ATPase-20S proteasome association which triggers gate opening, and supports translocation of unfolded substrates. The protein is Proteasome-activating nucleotidase of Methanothermobacter thermautotrophicus (strain ATCC 29096 / DSM 1053 / JCM 10044 / NBRC 100330 / Delta H) (Methanobacterium thermoautotrophicum).